A 92-amino-acid chain; its full sequence is Small ribosomal subunit protein uS19 (92 aa).

This sequence belongs to the universal ribosomal protein uS19 family.

Protein S19 forms a complex with S13 that binds strongly to the 16S ribosomal RNA. This is Small ribosomal subunit protein uS19 from Acidovorax sp. (strain JS42).